The following is a 334-amino-acid chain: NAD-dependent protein deacylase sirtuin-6 (334 aa).

Ser2 is modified (N-acetylserine). Ser10 bears the Phosphoserine mark. The 246-residue stretch at 27 to 272 folds into the Deacetylase sirtuin-type domain; sequence PEELERKVWE…CRLMKHLGLE (246 aa). Lys33 is subject to N6-acetyllysine. Positions 53, 57, 64, 65, 71, 113, and 133 each coordinate NAD(+). His133 acts as the Proton acceptor in catalysis. Zn(2+) is bound by residues Cys141, Cys144, and Cys166. Lys170 is covalently cross-linked (Glycyl lysine isopeptide (Lys-Gly) (interchain with G-Cter in ubiquitin)). Cys177 serves as a coordination point for Zn(2+). NAD(+) contacts are provided by Gly214, Ser216, Asn240, Gln242, and Val258. The segment at 312 to 334 is disordered; the sequence is KSKPNSPILHRPPKRVKTEAAPS.

This sequence belongs to the sirtuin family. Class IV subfamily. As to quaternary structure, homodimer; binds to nucleosomes and DNA ends as a homodimer. Interacts with RELA; interferes with RELA binding to target DNA. Interacts with SMARCA5; promoting recruitment of SMARCA5/SNF2H to double-strand breaks (DSBs) sites. Interacts with the mTORC2 complex; preventing the ability of SIRT6 to deacetylate FOXO1. Interacts with the CLOCK-BMAL1 complex; recruited by the CLOCK-BMAL1 complex to regulate expression of clock-controlled genes. Interacts with CSNK2A2; preventing CSNK2A2 localization to the nucleus. Requires Zn(2+) as cofactor. In terms of processing, acetylated at Lys-33. Deacetylation at Lys-33 by SIRT1 promotes homomultimerization and binding to double-strand breaks (DSBs) sites. Phosphorylation at Ser-10 by MAPK8/JNK1 in response to oxidative stress stimulates the mono-ADP-ribosyltransferase activity on PARP1, leading to PARP1 recruitment to double-strand breaks (DSBs). Post-translationally, monoubiquitinated at Lys-170 by STUB1/CHIP, preventing its degradation by the proteasome. In terms of processing, sumoylated, leading to specifically decrease ability to deacetylate histone H3 at 'Lys-56' (H3K56ac). As to expression, highest levels are found in muscle, thymus, spleen, brain and heart (at protein level).

The protein resides in the nucleus. Its subcellular location is the chromosome. It localises to the telomere. The protein localises to the endoplasmic reticulum. The catalysed reaction is N(6)-acetyl-L-lysyl-[protein] + NAD(+) + H2O = 2''-O-acetyl-ADP-D-ribose + nicotinamide + L-lysyl-[protein]. It carries out the reaction N(6)-tetradecanoyl-L-lysyl-[protein] + NAD(+) + H2O = 2''-O-tetradecanoyl-ADP-D-ribose + nicotinamide + L-lysyl-[protein]. The enzyme catalyses N(6)-hexadecanoyl-L-lysyl-[protein] + NAD(+) + H2O = 2''-O-hexadecanoyl-ADP-D-ribose + nicotinamide + L-lysyl-[protein]. It catalyses the reaction L-lysyl-[protein] + NAD(+) = N(6)-(ADP-D-ribosyl)-L-lysyl-[protein] + nicotinamide + H(+). The catalysed reaction is L-arginyl-[protein] + NAD(+) = N(omega)-(ADP-D-ribosyl)-L-arginyl-[protein] + nicotinamide + H(+). Compared to the defatty-acylase activity, the protein deacetylase activity is weak in vitro, and requires activation. The histone deacetylase activity is strongly activated upon binding to nucleosomes and chromatin in vivo. Two molecules of SIRT6 associate with the acidic patch of one nucleosome, while the C-terminal disordered region of SIRT6 associates with nucleosomal DNA, leading to efficient histone deacetylation. The protein-lysine deacetylase activity is also activated by long-chain free fatty-acids. In terms of biological role, NAD-dependent protein deacetylase, deacylase and mono-ADP-ribosyltransferase that plays an essential role in DNA damage repair, telomere maintenance, metabolic homeostasis, inflammation, tumorigenesis and aging. Displays protein-lysine deacetylase or defatty-acylase (demyristoylase and depalmitoylase) activity, depending on the context. Acts as a key histone deacetylase by catalyzing deacetylation of histone H3 at 'Lys-9', 'Lys-18' and 'Lys-56' (H3K9ac, H3K18ac and H3K56ac, respectively), suppressing target gene expression of several transcription factors, including NF-kappa-B. Acts as an inhibitor of transcription elongation by mediating deacetylation of H3K9ac and H3K56ac, preventing release of NELFE from chromatin and causing transcriptional pausing. Involved in DNA repair by promoting double-strand break (DSB) repair: acts as a DSB sensor by recognizing and binding DSB sites, leading to (1) recruitment of DNA repair proteins, such as SMARCA5/SNF2H, and (2) deacetylation of histone H3K9ac and H3K56ac. SIRT6 participation to DSB repair is probably involved in extension of life span. Also promotes DNA repair by deacetylating non-histone proteins, such as DDB2 and p53/TP53. Specifically deacetylates H3K18ac at pericentric heterochromatin, thereby maintaining pericentric heterochromatin silencing at centromeres and protecting against genomic instability and cellular senescence. Involved in telomere maintenance by catalyzing deacetylation of histone H3 in telomeric chromatin, regulating telomere position effect and telomere movement in response to DNA damage. Required for embryonic stem cell differentiation by mediating histone deacetylation of H3K9ac. Plays a major role in metabolism by regulating processes such as glycolysis, gluconeogenesis, insulin secretion and lipid metabolism. Inhibits glycolysis via histone deacetylase activity and by acting as a corepressor of the transcription factor HIF1A, thereby controlling the expression of multiple glycolytic genes. Has tumor suppressor activity by repressing glycolysis, thereby inhibiting the Warburg effect. Also regulates glycolysis and tumorigenesis by mediating deacetylation and nuclear export of non-histone proteins, such as isoform M2 of PKM (PKM2). Acts as a negative regulator of gluconeogenesis by mediating deacetylation of non-histone proteins, such as FOXO1 and KAT2A/GCN5. Promotes beta-oxidation of fatty acids during fasting by catalyzing deacetylation of NCOA2, inducing coactivation of PPARA. Acts as a regulator of lipid catabolism in brown adipocytes, both by catalyzing deacetylation of histones and non-histone proteins, such as FOXO1. Also acts as a regulator of circadian rhythms, both by regulating expression of clock-controlled genes involved in lipid and carbohydrate metabolism, and by catalyzing deacetylation of PER2. The defatty-acylase activity is specifically involved in regulation of protein secretion. Has high activity toward long-chain fatty acyl groups and mediates protein-lysine demyristoylation and depalmitoylation of target proteins, such as RRAS2 and TNF, thereby regulating their secretion. Also acts as a mono-ADP-ribosyltransferase by mediating mono-ADP-ribosylation of PARP1, TRIM28/KAP1 or SMARCC2/BAF170. Mono-ADP-ribosyltransferase activity is involved in DNA repair, cellular senescence, repression of LINE-1 retrotransposon elements and regulation of transcription. The sequence is that of NAD-dependent protein deacylase sirtuin-6 from Mus musculus (Mouse).